Consider the following 544-residue polypeptide: Probable protein kinase UbiB (544 aa).

Residues aspartate 123–leucine 504 enclose the Protein kinase domain. ATP is bound by residues leucine 129–valine 137 and lysine 155. The Proton acceptor role is filled by aspartate 290. 2 helical membrane-spanning segments follow: residues methionine 501–leucine 521 and leucine 523–leucine 543.

Belongs to the ABC1 family. UbiB subfamily.

Its subcellular location is the cell inner membrane. The protein operates within cofactor biosynthesis; ubiquinone biosynthesis [regulation]. Functionally, is probably a protein kinase regulator of UbiI activity which is involved in aerobic coenzyme Q (ubiquinone) biosynthesis. In Histophilus somni (strain 129Pt) (Haemophilus somnus), this protein is Probable protein kinase UbiB.